The chain runs to 104 residues: MQKIRRDDEVIVIAGKDKGKRGKVLKVLADDRLVVGGVNLIKRHTKPNPMLGQQGGIVEKEAPLHVSNVAIFNTETSKADRVGFKVEDGKKIRVFKSTQKPVQA.

It belongs to the universal ribosomal protein uL24 family. As to quaternary structure, part of the 50S ribosomal subunit.

Its function is as follows. One of two assembly initiator proteins, it binds directly to the 5'-end of the 23S rRNA, where it nucleates assembly of the 50S subunit. In terms of biological role, one of the proteins that surrounds the polypeptide exit tunnel on the outside of the subunit. The chain is Large ribosomal subunit protein uL24 from Pseudomonas aeruginosa (strain LESB58).